The following is a 124-amino-acid chain: MTTINQLVRKPRVSKKEKSNVPALEGCPQRRGVCTRVYTTTPKKPNSALRKVARVRLTNGAEVTSYIGGEGHNLQEHSVILIRGGRVKDLPGVRYHVVRGSLDTAGVQKRRQGRSKYGAKRPKS.

Aspartate 89 is modified (3-methylthioaspartic acid). The tract at residues aspartate 103 to serine 124 is disordered. A compositionally biased stretch (basic residues) spans glutamine 108–serine 124.

This sequence belongs to the universal ribosomal protein uS12 family. As to quaternary structure, part of the 30S ribosomal subunit. Contacts proteins S8 and S17. May interact with IF1 in the 30S initiation complex.

With S4 and S5 plays an important role in translational accuracy. In terms of biological role, interacts with and stabilizes bases of the 16S rRNA that are involved in tRNA selection in the A site and with the mRNA backbone. Located at the interface of the 30S and 50S subunits, it traverses the body of the 30S subunit contacting proteins on the other side and probably holding the rRNA structure together. The combined cluster of proteins S8, S12 and S17 appears to hold together the shoulder and platform of the 30S subunit. This is Small ribosomal subunit protein uS12 from Methylococcus capsulatus (strain ATCC 33009 / NCIMB 11132 / Bath).